We begin with the raw amino-acid sequence, 448 residues long: O-Mevalon transferase yanI (448 aa).

N-linked (GlcNAc...) asparagine glycosylation is present at Asn2. 8 helical membrane passes run 21–41, 54–74, 79–96, 165–185, 217–237, 316–336, 350–370, and 390–410; these read VLLSHSLASTHYTVLAFLLAV, YGLLLLQITCALQAFVAPPPP, AVLYTSGVLMANLLARYF, FVTAQLLTIIAMYAGLYLVEV, LIVLGLALVVYSHFALFVLPL, MLMLITFVISGLIHTSGSYHV, VKYFISQAISIMIEDFGCWLL, and IVTAGWYFWSRVHWSVMPVAL.

It belongs to the wax synthase family.

Its subcellular location is the membrane. The protein operates within secondary metabolite biosynthesis; terpenoid biosynthesis. In terms of biological role, O-Mevalon transferase yanI; part of the gene cluster that mediates the biosynthesis of yanuthone D, a fungal isoprenoid epoxycyclohexenone that acts as an antibiotic against fungi and bacteria. The first step of the pathway is the synthesis of 6-methylsalicylic acid (6-MSA) by the polyketide synthase yanA. 6-MSA is then converted to m-cresol by the decarboxylase yanB. The cytochrome P450 monooxygenase yanC then catalyzes the oxidation of m-cresol to toluquinol. Epoxidation of toluquinol is then performed by the short chain dehydrogenase yanD, with the help of yanE, and a further prenylation by yanG leads to 7-deacetoxyyanuthone A. The next step is the hydroxylation of C-22 of 7-deacetoxyyanuthone A by the cytochrome P450 monooxygenase yanH to yield 22-deacetylyanuthone A. O-Mevalon transferase yanI then attaches mevalon to the hydroxyl group of 22-deacetylyanuthone A to produce yanuthone E. Finally, the FAD-dependent monooxygenase yanF oxidizes the hydroxyl group at C15 of yanuthone E to form yanuthone D. Furthermore, several branching points in the pathway lead to the production of yanuthones F and G from 7-deacetoxyyanuthone A; yanuthones H and I from 22-deacetylyanuthone A; and yanuthone J from yanuthone E. This is O-Mevalon transferase yanI from Aspergillus niger (strain ATCC 1015 / CBS 113.46 / FGSC A1144 / LSHB Ac4 / NCTC 3858a / NRRL 328 / USDA 3528.7).